We begin with the raw amino-acid sequence, 28 residues long: Small spore coat assembly protein A (28 aa).

The chain crosses the membrane as a helical span at residues 8-28 (GFALLVVLFILLIIVGAAYIY).

Belongs to the SscA family.

Its subcellular location is the spore coat. It is found in the membrane. Functionally, spore protein involved in the assembly of several components of the spore coat, including CotB, CotG and CotH, and in spore germination. The sequence is that of Small spore coat assembly protein A from Bacillus subtilis (strain 168).